The sequence spans 395 residues: Formate-dependent phosphoribosylglycinamide formyltransferase (395 aa).

N(1)-(5-phospho-beta-D-ribosyl)glycinamide contacts are provided by residues 22–23 (EL) and glutamate 82. ATP contacts are provided by residues arginine 115, lysine 156, 161-166 (SSGKGQ), 196-199 (EGFI), and glutamate 204. The ATP-grasp domain occupies 120 to 309 (RLAAETLGLP…EFALHARAIL (190 aa)). Glutamate 268 and glutamate 280 together coordinate Mg(2+). N(1)-(5-phospho-beta-D-ribosyl)glycinamide contacts are provided by residues aspartate 287, lysine 356, and 363–364 (RR).

This sequence belongs to the PurK/PurT family. In terms of assembly, homodimer.

The catalysed reaction is N(1)-(5-phospho-beta-D-ribosyl)glycinamide + formate + ATP = N(2)-formyl-N(1)-(5-phospho-beta-D-ribosyl)glycinamide + ADP + phosphate + H(+). It functions in the pathway purine metabolism; IMP biosynthesis via de novo pathway; N(2)-formyl-N(1)-(5-phospho-D-ribosyl)glycinamide from N(1)-(5-phospho-D-ribosyl)glycinamide (formate route): step 1/1. Functionally, involved in the de novo purine biosynthesis. Catalyzes the transfer of formate to 5-phospho-ribosyl-glycinamide (GAR), producing 5-phospho-ribosyl-N-formylglycinamide (FGAR). Formate is provided by PurU via hydrolysis of 10-formyl-tetrahydrofolate. This chain is Formate-dependent phosphoribosylglycinamide formyltransferase, found in Stenotrophomonas maltophilia (strain K279a).